The chain runs to 341 residues: HTH-type transcriptional repressor PurR (341 aa).

The HTH lacI-type domain occupies 2-56 (ATIKDVAKHAGVSTTTVSHVINKTRFVAENTKAAVWAAIKELHYSPSAVARSLKV). Residues 4–23 (IKDVAKHAGVSTTTVSHVIN) constitute a DNA-binding region (H-T-H motif). Residues 48-56 (SAVARSLKV) mediate DNA binding. The hypoxanthine site is built by Tyr-73, Arg-190, Thr-192, and Asp-275.

As to quaternary structure, homodimer.

Its pathway is purine metabolism; purine nucleotide biosynthesis [regulation]. Its function is as follows. Is the main repressor of the genes involved in the de novo synthesis of purine nucleotides, regulating purB, purC, purEK, purF, purHD, purL, purMN and guaBA expression. PurR is allosterically activated to bind its cognate DNA by binding the purine corepressors, hypoxanthine or guanine, thereby effecting transcription repression. This Yersinia pestis bv. Antiqua (strain Antiqua) protein is HTH-type transcriptional repressor PurR.